Consider the following 519-residue polypeptide: Glycogen synthase (519 aa).

A disordered region spans residues 1-40; sequence MISAAVEPHVDAFKPDNREPLTPDFATTGKAPGAQRQHNP. A compositionally biased stretch (basic and acidic residues) spans 8 to 21; sequence PHVDAFKPDNREPL. Residue Lys-57 participates in ADP-alpha-D-glucose binding.

It belongs to the glycosyltransferase 1 family. Bacterial/plant glycogen synthase subfamily.

The catalysed reaction is [(1-&gt;4)-alpha-D-glucosyl](n) + ADP-alpha-D-glucose = [(1-&gt;4)-alpha-D-glucosyl](n+1) + ADP + H(+). It participates in glycan biosynthesis; glycogen biosynthesis. Its function is as follows. Synthesizes alpha-1,4-glucan chains using ADP-glucose. This Pseudomonas putida (strain ATCC 47054 / DSM 6125 / CFBP 8728 / NCIMB 11950 / KT2440) protein is Glycogen synthase.